A 215-amino-acid polypeptide reads, in one-letter code: Ribose-5-phosphate isomerase A (215 aa).

Residues 26–29, 79–82, and 92–95 each bind substrate; these read TGST, DGAD, and KGGG. Residue Glu101 is the Proton acceptor of the active site. Residue Lys119 coordinates substrate.

This sequence belongs to the ribose 5-phosphate isomerase family. As to quaternary structure, homodimer.

It catalyses the reaction aldehydo-D-ribose 5-phosphate = D-ribulose 5-phosphate. Its pathway is carbohydrate degradation; pentose phosphate pathway; D-ribose 5-phosphate from D-ribulose 5-phosphate (non-oxidative stage): step 1/1. Catalyzes the reversible conversion of ribose-5-phosphate to ribulose 5-phosphate. This is Ribose-5-phosphate isomerase A from Xylella fastidiosa (strain 9a5c).